We begin with the raw amino-acid sequence, 382 residues long: Galactokinase (382 aa).

34–37 (EHTD) serves as a coordination point for substrate. 124 to 130 (GAGLSSS) is an ATP binding site. The Mg(2+) site is built by S130 and E162. The active-site Proton acceptor is D174. Y223 contributes to the substrate binding site.

This sequence belongs to the GHMP kinase family. GalK subfamily.

Its subcellular location is the cytoplasm. The catalysed reaction is alpha-D-galactose + ATP = alpha-D-galactose 1-phosphate + ADP + H(+). The protein operates within carbohydrate metabolism; galactose metabolism. Catalyzes the transfer of the gamma-phosphate of ATP to D-galactose to form alpha-D-galactose-1-phosphate (Gal-1-P). The protein is Galactokinase of Salmonella heidelberg (strain SL476).